Reading from the N-terminus, the 336-residue chain is Probable allantoicase (336 aa).

It belongs to the allantoicase family.

It carries out the reaction allantoate + H2O = (S)-ureidoglycolate + urea. Its pathway is nitrogen metabolism; (S)-allantoin degradation; (S)-ureidoglycolate from allantoate (aminidohydrolase route): step 1/1. This Acinetobacter baumannii (strain ACICU) protein is Probable allantoicase.